The primary structure comprises 422 residues: Probable metallocarboxypeptidase A (422 aa).

The first 17 residues, 1–17 (MRSVLSLALLAVNVVTA), serve as a signal peptide directing secretion. Residues 18-112 (AVVAPFDYSG…FEAYSAGYAP (95 aa)) constitute a propeptide, activation peptide. In terms of domain architecture, Peptidase M14 spans 119–419 (SYHSYQDHLS…AGTVAMLKAV (301 aa)). Residues histidine 179 and glutamate 182 each coordinate Zn(2+). Substrate-binding positions include 179–182 (HARE), arginine 237, and 254–255 (NR). A disulfide bond links cysteine 248 and cysteine 271. Histidine 309 lines the Zn(2+) pocket. A substrate-binding site is contributed by 310 to 311 (SY). Glutamate 385 (proton donor/acceptor) is an active-site residue.

This sequence belongs to the peptidase M14 family. Zn(2+) is required as a cofactor.

It localises to the secreted. In terms of biological role, extracellular metalloprotease that contributes to pathogenicity. This Trichophyton verrucosum (strain HKI 0517) protein is Probable metallocarboxypeptidase A (MCPA).